A 264-amino-acid chain; its full sequence is S-adenosylmethionine decarboxylase proenzyme (264 aa).

Ser113 functions as the Schiff-base intermediate with substrate; via pyruvic acid in the catalytic mechanism. Ser113 carries the post-translational modification Pyruvic acid (Ser); by autocatalysis. Catalysis depends on His118, which acts as the Proton acceptor; for processing activity. Catalysis depends on Cys141, which acts as the Proton donor; for catalytic activity.

This sequence belongs to the prokaryotic AdoMetDC family. Type 2 subfamily. As to quaternary structure, heterooctamer of four alpha and four beta chains arranged as a tetramer of alpha/beta heterodimers. It depends on pyruvate as a cofactor. Is synthesized initially as an inactive proenzyme. Formation of the active enzyme involves a self-maturation process in which the active site pyruvoyl group is generated from an internal serine residue via an autocatalytic post-translational modification. Two non-identical subunits are generated from the proenzyme in this reaction, and the pyruvate is formed at the N-terminus of the alpha chain, which is derived from the carboxyl end of the proenzyme. The post-translation cleavage follows an unusual pathway, termed non-hydrolytic serinolysis, in which the side chain hydroxyl group of the serine supplies its oxygen atom to form the C-terminus of the beta chain, while the remainder of the serine residue undergoes an oxidative deamination to produce ammonia and the pyruvoyl group blocking the N-terminus of the alpha chain.

It carries out the reaction S-adenosyl-L-methionine + H(+) = S-adenosyl 3-(methylsulfanyl)propylamine + CO2. The protein operates within amine and polyamine biosynthesis; S-adenosylmethioninamine biosynthesis; S-adenosylmethioninamine from S-adenosyl-L-methionine: step 1/1. Functionally, catalyzes the decarboxylation of S-adenosylmethionine to S-adenosylmethioninamine (dcAdoMet), the propylamine donor required for the synthesis of the polyamines spermine and spermidine from the diamine putrescine. This chain is S-adenosylmethionine decarboxylase proenzyme, found in Pseudomonas syringae pv. syringae (strain B728a).